A 192-amino-acid chain; its full sequence is Putative ripening-related protein 2 (192 aa).

A signal peptide spans 1 to 26; sequence MATTNCLLALAIAGLVLVSLPGLSRG.

This sequence belongs to the kiwellin family.

The protein localises to the secreted. The chain is Putative ripening-related protein 2 from Oryza sativa subsp. japonica (Rice).